We begin with the raw amino-acid sequence, 155 residues long: SsrA-binding protein (155 aa).

Residues 135 to 155 (KRESLKRRQDQRDIQRAMKNY) are disordered.

This sequence belongs to the SmpB family.

It localises to the cytoplasm. In terms of biological role, required for rescue of stalled ribosomes mediated by trans-translation. Binds to transfer-messenger RNA (tmRNA), required for stable association of tmRNA with ribosomes. tmRNA and SmpB together mimic tRNA shape, replacing the anticodon stem-loop with SmpB. tmRNA is encoded by the ssrA gene; the 2 termini fold to resemble tRNA(Ala) and it encodes a 'tag peptide', a short internal open reading frame. During trans-translation Ala-aminoacylated tmRNA acts like a tRNA, entering the A-site of stalled ribosomes, displacing the stalled mRNA. The ribosome then switches to translate the ORF on the tmRNA; the nascent peptide is terminated with the 'tag peptide' encoded by the tmRNA and targeted for degradation. The ribosome is freed to recommence translation, which seems to be the essential function of trans-translation. This Trichormus variabilis (strain ATCC 29413 / PCC 7937) (Anabaena variabilis) protein is SsrA-binding protein.